A 158-amino-acid polypeptide reads, in one-letter code: HTH-type transcriptional repressor NicR (158 aa).

Residues 20–152 (TEQVGHLLRK…ILYLLRKMID (133 aa)) enclose the HTH marR-type domain. Positions 66-89 (QAELIKATAVDQATIRGIVERLKA) form a DNA-binding region, H-T-H motif.

The protein operates within cofactor degradation; nicotinate degradation [regulation]. In terms of biological role, transcriptional repressor for the nicCDEFTP and nicXR operons, encoding the lower aerobic nicotinate degradation pathway. Acts under non-induced conditions: repression of the nicCDEFTP and nicXR operons becomes alleviated in presence of 6-hydroxynicotinate (6HNA). This chain is HTH-type transcriptional repressor NicR (nicR), found in Pseudomonas putida (strain ATCC 47054 / DSM 6125 / CFBP 8728 / NCIMB 11950 / KT2440).